The primary structure comprises 649 residues: Acid beta-fructofuranosidase (649 aa).

Topologically, residues Met-1–Lys-22 are cytoplasmic. Positions Met-1–Ala-101 are cleaved as a propeptide — removed in mature form. The chain crosses the membrane as a helical; Signal-anchor for type II membrane protein span at residues Asp-23–Tyr-43. The Lumenal portion of the chain corresponds to Arg-44 to Ser-649. Residues His-52–Trp-75 are disordered. The span at Ser-54–Ser-72 shows a compositional bias: polar residues. Substrate contacts are provided by residues Trp-127–Asp-130, Gln-146, Trp-154, and Trp-189–Thr-190. Residue Asp-130 is part of the active site. An N-linked (GlcNAc...) (complex) asparagine glycan is attached at Asn-210. Residue Arg-253 to Asp-254 coordinates substrate. Asn-275 carries N-linked (GlcNAc...) (complex) asparagine glycosylation. Residues Glu-308 and Asp-341 each contribute to the substrate site. Cys-498 and Cys-546 are oxidised to a cystine. An N-linked (GlcNAc...) (high mannose) asparagine glycan is attached at Asn-618.

This sequence belongs to the glycosyl hydrolase 32 family. Present in two forms, a 70 kDa monomer and a heterodimer of the 30 kDa and 38 kDa subunits. The ratio of the levels of the two forms within cells appears to be regulated developmentally.

The protein localises to the membrane. The protein resides in the vacuole lumen. It catalyses the reaction Hydrolysis of terminal non-reducing beta-D-fructofuranoside residues in beta-D-fructofuranosides.. It participates in glycan biosynthesis; sucrose metabolism. In terms of biological role, possible role in the continued mobilization of sucrose to sink organs. This chain is Acid beta-fructofuranosidase (INVA), found in Vigna radiata var. radiata (Mung bean).